The sequence spans 231 residues: MAVSELEVDGVVFPPLARPPGSAHAHFLAGAGVRGMEIGGHFIKFTAIGVYLQADAAVSALAAKWAGKPAADLASDAAFFRDVVTGEFEKFTRVTMILPLTGAQYSDKVTENCVAYWKAAGVYTDAEAAAVDKFKEAFGPHSFAPGASILFTHSPAGVLTVAFSKDSSVPESGGVAIENARLCEAVLESIIGEHGVSPAAKLSLANRVAELLKGAAHAGGEPAAEPVPVSV.

Positions 46, 112, and 189 each coordinate substrate.

This sequence belongs to the chalcone isomerase family.

The enzyme catalyses a chalcone = a flavanone.. Its pathway is secondary metabolite biosynthesis; flavonoid biosynthesis. Functionally, catalyzes the intramolecular cyclization of bicyclic chalcones into tricyclic (S)-flavanones. Responsible for the isomerization of 4,2',4',6'-tetrahydroxychalcone (also termed chalcone) into naringenin. This is Chalcone--flavanone isomerase (CHI) from Hordeum vulgare (Barley).